Consider the following 31-residue polypeptide: Palustrin-2a (31 aa).

An intrachain disulfide couples Cys23 to Cys29.

As to expression, expressed by the skin glands.

It localises to the secreted. Functionally, antimicrobial activity against Gram-negative bacterium E.coli. The protein is Palustrin-2a of Lithobates palustris (Pickerel frog).